The following is a 149-amino-acid chain: Transcriptional repressor NrdR (149 aa).

Residues 3–34 (CPFCATDDTKVVDSRLTADGYQIRRRRECPVC) fold into a zinc finger. An ATP-cone domain is found at 49-139 (PHIVKNNGSR…VYLSFDDVEE (91 aa)).

This sequence belongs to the NrdR family. It depends on Zn(2+) as a cofactor.

Its function is as follows. Negatively regulates transcription of bacterial ribonucleotide reductase nrd genes and operons by binding to NrdR-boxes. The polypeptide is Transcriptional repressor NrdR (Glaesserella parasuis serovar 5 (strain SH0165) (Haemophilus parasuis)).